We begin with the raw amino-acid sequence, 609 residues long: Serine/threonine-protein phosphatase 4 regulatory subunit 2 (609 aa).

The residue at position 68 (Ser68) is a Phosphoserine. The disordered stretch occupies residues 175–569 (NNNGNADEGS…EEARVSPSAT (395 aa)). The span at 183–194 (GSSPGAGSAGCA) shows a compositional bias: low complexity. Positions 201–225 (RSDDNDQPKAKKAKLEIDGEERSEA) are enriched in basic and acidic residues. 2 positions are modified to phosphoserine: Ser223 and Ser226. The segment covering 233–244 (VATRVKNEKDEK) has biased composition (basic and acidic residues). Ser252 carries the phosphoserine modification. Over residues 258–270 (EIEEPDEEVDEAD) the composition is skewed to acidic residues. 2 stretches are compositionally biased toward basic and acidic residues: residues 310-351 (IEAE…KPDG) and 375-400 (EPVKVKAENEKEEKKHAPIKTEKQDD). Over residues 401–410 (IDSTETDDAP) the composition is skewed to acidic residues. Positions 414–462 (KPAEEKIASSESKPKTKSEDDPEAETKKSQPEKTETEAAEKSVSDEKQA) are enriched in basic and acidic residues. Position 602 is a phosphothreonine (Thr602). Ser603 bears the Phosphoserine mark.

It belongs to the PPP4R2 family. In terms of assembly, serine/threonine-protein phosphatase 4 (PP4) occurs in different assemblies of the catalytic and one or more regulatory subunits. Probably part of a PP4 PPP4C-PPP4R2-PPP4R3 complex containing Pp4-19C, PPP4R2r and flfl.

Regulatory subunit of serine/threonine-protein phosphatase 4 (PP4). The probable PP4 complex Pp4-19C-PPP4R2r-flfl (PPP4C-PPP4R2-PPP4R3) is required to prevent caspase induced cell death (in vitro). This is Serine/threonine-protein phosphatase 4 regulatory subunit 2 (PPP4R2r) from Drosophila melanogaster (Fruit fly).